Here is a 307-residue protein sequence, read N- to C-terminus: Elongation factor Ts (307 aa).

The segment at 80-83 is involved in Mg(2+) ion dislocation from EF-Tu; sequence TDFV.

The protein belongs to the EF-Ts family.

It localises to the cytoplasm. Associates with the EF-Tu.GDP complex and induces the exchange of GDP to GTP. It remains bound to the aminoacyl-tRNA.EF-Tu.GTP complex up to the GTP hydrolysis stage on the ribosome. The protein is Elongation factor Ts of Bradyrhizobium diazoefficiens (strain JCM 10833 / BCRC 13528 / IAM 13628 / NBRC 14792 / USDA 110).